The primary structure comprises 83 residues: Cobrotoxin homolog (83 aa).

Positions 1–21 are cleaved as a signal peptide; the sequence is METLLLTLLVVTIVCLDLGYT. Intrachain disulfides connect Cys24/Cys45, Cys38/Cys62, Cys64/Cys75, and Cys76/Cys81.

The protein belongs to the three-finger toxin family. Short-chain subfamily. Type I alpha-neurotoxin sub-subfamily. In terms of tissue distribution, expressed by the venom gland.

Its subcellular location is the secreted. Functionally, binds to muscle nicotinic acetylcholine receptor (nAChR) and inhibit acetylcholine from binding to the receptor, thereby impairing neuromuscular transmission. This chain is Cobrotoxin homolog, found in Naja naja (Indian cobra).